The primary structure comprises 731 residues: Gelsolin (731 aa).

An actin-severing region spans residues Val-2–Phe-125. One copy of the Gelsolin-like 1 repeat lies at Phe-25 to Leu-107. Tyr-35 carries the phosphotyrosine modification. Gly-41, Asp-42, Glu-73, Asp-85, Gly-90, and Ala-92 together coordinate Ca(2+). The tract at residues Asp-72 to Gly-75 is actin-actin interfilament contact point. A 1,2-diacyl-sn-glycero-3-phospho-(1D-myo-inositol-4,5-bisphosphate) is bound at residue Lys-111–Lys-118. Position 121 (Val-121) interacts with Ca(2+). Arg-137 to Arg-145 contributes to the a 1,2-diacyl-sn-glycero-3-phospho-(1D-myo-inositol-4,5-bisphosphate) binding site. A Gelsolin-like 2 repeat occupies Val-147 to Met-219. 2 residues coordinate Ca(2+): Gly-162 and Asp-163. An intrachain disulfide couples Cys-164 to Cys-177. Glu-185 contributes to the Ca(2+) binding site. Basic and acidic residues predominate over residues Arg-197–Glu-211. Residues Arg-197–Pro-216 form a disordered region. Ca(2+) is bound by residues Asp-235, Glu-278, Asp-279, and Glu-303. A Gelsolin-like 3 repeat occupies Asp-266–Phe-338. Phosphotyrosine occurs at positions 358 and 414. The interval Ala-383–Ala-731 is actin-binding, Ca-sensitive. Residues Ser-404–Met-485 form a Gelsolin-like 4 repeat. Ca(2+) is bound by residues Gly-420, Asp-421, Glu-451, Asp-463, Gly-468, Pro-470, and Thr-500. A Gelsolin-like 5 repeat occupies Ala-527–Trp-591. Lys-533 carries the post-translational modification N6-acetyllysine. Ca(2+) is bound by residues Asn-540 and Asp-541. Tyr-552 is modified (phosphotyrosine). Glu-563 provides a ligand contact to Ca(2+). Tyr-600 carries the post-translational modification Phosphotyrosine. A Gelsolin-like 6 repeat occupies Ile-630 to Phe-705. Residues Asp-645, Asp-646, and Glu-668 each contribute to the Ca(2+) site. Phosphothreonine is present on Thr-691.

It belongs to the villin/gelsolin family. As to quaternary structure, binds to actin and to fibronectin. Identified in a complex composed of ACTA1, COBL, GSN and TMSB4X. Interacts with the inactive form of EIF2AK2/PKR. Interacts with FLII.

The protein resides in the cytoplasm. It localises to the cytoskeleton. Its function is as follows. Calcium-regulated, actin-modulating protein that binds to the plus (or barbed) ends of actin monomers or filaments, preventing monomer exchange (end-blocking or capping). It can promote the assembly of monomers into filaments (nucleation) as well as sever filaments already formed. Plays a role in ciliogenesis. In Bos taurus (Bovine), this protein is Gelsolin (GSN).